The sequence spans 499 residues: Guanosine-5'-triphosphate,3'-diphosphate pyrophosphatase (499 aa).

This sequence belongs to the GppA/Ppx family. GppA subfamily.

The enzyme catalyses guanosine 3'-diphosphate 5'-triphosphate + H2O = guanosine 3',5'-bis(diphosphate) + phosphate + H(+). It functions in the pathway purine metabolism; ppGpp biosynthesis; ppGpp from GTP: step 2/2. Its function is as follows. Catalyzes the conversion of pppGpp to ppGpp. Guanosine pentaphosphate (pppGpp) is a cytoplasmic signaling molecule which together with ppGpp controls the 'stringent response', an adaptive process that allows bacteria to respond to amino acid starvation, resulting in the coordinated regulation of numerous cellular activities. In Sodalis glossinidius (strain morsitans), this protein is Guanosine-5'-triphosphate,3'-diphosphate pyrophosphatase.